The following is a 337-amino-acid chain: Molybdate import system permease protein MolB (337 aa).

The Cytoplasmic segment spans residues 1 to 5; the sequence is MQPDS. A helical membrane pass occupies residues 6–25; the sequence is YPKILFGLTLLLVITAVISL. Residues 26–51 are Periplasmic-facing; that stretch reads GIGRYSLSVPQIGQILWAKATALEID. The chain crosses the membrane as a helical span at residues 52 to 87; the sequence is PVQQQVIFQVRLPRILTALCVGAGLALSGVVLQGIF. The Cytoplasmic segment spans residues 88 to 98; the sequence is RNPLVNPHIIG. The helical transmembrane segment at 99 to 113 threads the bilayer; the sequence is VTSGSAFGGTLAIFF. Residues 114 to 116 are Periplasmic-facing; the sequence is GFS. Residues 117 to 140 traverse the membrane as a helical segment; that stretch reads LYGLFTSTILFGFGTLALVFLFSF. Residues 141–146 lie on the Cytoplasmic side of the membrane; it reads KFNQRS. A helical membrane pass occupies residues 147–171; that stretch reads LLMLILIGMILSGLFSALVSLLQYI. Over 172–193 the chain is Periplasmic; that stretch reads SDTEEKLPSIVFWLMGSFATSN. The helical transmembrane segment at 194-214 threads the bilayer; sequence WEKLLFFFVPFLLCSSILLSL. At 215–234 the chain is on the cytoplasmic side; it reads SWRLNLLSLDEKEAKALGVK. A helical membrane pass occupies residues 235–257; the sequence is MAPLRWLVIFLSGSLVACQVAIS. Topologically, residues 258 to 264 are periplasmic; that stretch reads GSIGWVG. A helical transmembrane segment spans residues 265–275; that stretch reads LIIPHLSRMLV. The Cytoplasmic segment spans residues 276–278; the sequence is GAN. A helical membrane pass occupies residues 279 to 304; sequence HQSLLPCTMLVGATYMLLVDNVARSL. At 305 to 310 the chain is on the periplasmic side; it reads SDAEIP. The helical transmembrane segment at 311–329 threads the bilayer; the sequence is ISILTALIGAPLFGVLVYK. Over 330–337 the chain is Cytoplasmic; the sequence is LKRGGMNE.

This sequence belongs to the binding-protein-dependent transport system permease family. FecCD subfamily. As to quaternary structure, the complex is composed of two ATP-binding proteins (MolC), two transmembrane proteins (MolB) and a solute-binding protein (MolA).

The protein resides in the cell inner membrane. The MolBCA complex shows a decrease in affinity in the presence of increasing concentrations of substrate and nucleotide. In terms of biological role, part of the ABC transporter complex MolBCA involved in molybdate import. Responsible for the translocation of the substrate across the membrane. Functions as a low-affinity molybdate transporter. This chain is Molybdate import system permease protein MolB, found in Haemophilus influenzae (strain ATCC 51907 / DSM 11121 / KW20 / Rd).